An 88-amino-acid chain; its full sequence is Small ribosomal subunit protein uS15 (88 aa).

The protein belongs to the universal ribosomal protein uS15 family. In terms of assembly, part of the 30S ribosomal subunit. Forms a bridge to the 50S subunit in the 70S ribosome, contacting the 23S rRNA.

One of the primary rRNA binding proteins, it binds directly to 16S rRNA where it helps nucleate assembly of the platform of the 30S subunit by binding and bridging several RNA helices of the 16S rRNA. Its function is as follows. Forms an intersubunit bridge (bridge B4) with the 23S rRNA of the 50S subunit in the ribosome. The protein is Small ribosomal subunit protein uS15 of Geobacter sulfurreducens (strain ATCC 51573 / DSM 12127 / PCA).